The chain runs to 152 residues: Large ribosomal subunit protein bL9 (152 aa).

This sequence belongs to the bacterial ribosomal protein bL9 family.

In terms of biological role, binds to the 23S rRNA. The chain is Large ribosomal subunit protein bL9 from Crocosphaera subtropica (strain ATCC 51142 / BH68) (Cyanothece sp. (strain ATCC 51142)).